A 112-amino-acid chain; its full sequence is Prostatic steroid-binding protein C2 (112 aa).

The first 20 residues, 1 to 20, serve as a signal peptide directing secretion; it reads MRLSLCLLTILVVCCYEANG. Residue glutamine 21 is modified to Pyrrolidone carboxylic acid.

It belongs to the secretoglobin family. Lipophilin subfamily. In terms of assembly, prostatein is composed of three different peptides called C1, C2 and C3. These form covalent C1:C3 (F) and C2:C3 (S) heterodimers whose noncovalent association forms tetrameric (C1:C3/C3:C2) prostatein molecules. Linked by three disulfide bonds to C3. In terms of processing, the N-terminus is blocked.

Its subcellular location is the secreted. In terms of biological role, part of prostatein which is the major secretory glycoprotein of ventral prostate gland. This Rattus norvegicus (Rat) protein is Prostatic steroid-binding protein C2 (Psbpc2).